The sequence spans 290 residues: Endoplasmic reticulum-Golgi intermediate compartment protein 1 (290 aa).

At 1-26 (MPFDFRRFDIYRKVPKDLTQPTYTGA) the chain is on the cytoplasmic side. A helical membrane pass occupies residues 27–47 (IISICCCLFITFLFLSELTGF). The Lumenal portion of the chain corresponds to 48–254 (IANEIVNELY…RRQPMYRFIT (207 aa)). An N-linked (GlcNAc...) asparagine glycan is attached at N74. The chain crosses the membrane as a helical span at residues 255 to 275 (TVCAIIGGTFTVAGILDSFIF). The Cytoplasmic segment spans residues 276 to 290 (TASEAWKKIQLGKMQ).

This sequence belongs to the ERGIC family.

Its subcellular location is the endoplasmic reticulum membrane. The protein localises to the endoplasmic reticulum-Golgi intermediate compartment membrane. It is found in the golgi apparatus membrane. In terms of biological role, possible role in transport between endoplasmic reticulum and Golgi. This chain is Endoplasmic reticulum-Golgi intermediate compartment protein 1 (ergic1), found in Xenopus laevis (African clawed frog).